The primary structure comprises 160 residues: MGVFTYETEFTSVIPPEKLFKAFILDADNLIPKVAPTAVKGTEILEGDGGVGTIKKVTFGEGSQYAYVKHRVDGIDKDNLSYSYTLIEGDALSDVIENIAYDIKLVASPDGGSIVKTTSHYHTKGDVEIKEEQVKAGKEKAAGLFKLVEAYLLANPDAYN.

The protein belongs to the BetVI family.

This is Major allergen Pru ar 1 from Prunus armeniaca (Apricot).